The chain runs to 705 residues: Effector protein hopD1 (705 aa).

Composition is skewed to polar residues over residues 1–11 (MNPLRSIQHNI) and 28–41 (QAQQ…SPSQ). Disordered regions lie at residues 1–41 (MNPL…SPSQ) and 173–207 (SSSL…DSGS). The segment covering 173–184 (SSSLETPLLSSP) has biased composition (low complexity).

The protein resides in the secreted. In terms of biological role, effector protein involved in non-host recognition. This chain is Effector protein hopD1 (hopD1), found in Pseudomonas syringae pv. tomato (strain ATCC BAA-871 / DC3000).